The following is a 138-amino-acid chain: MNTKIGLSLSEKYYWSWKTKTSNCPCFSCSGEGNIVINKVSGEKYLQYNLTYLKDIWAPLKELNLEKQFDIIALVRGGGLTGQTESIQLGVARLLCQMNPQNRSVLKPFGFLTRDARIKERKKYGLRKARKAPQYSKR.

It belongs to the universal ribosomal protein uS9 family.

It is found in the plastid. Its subcellular location is the chloroplast. The polypeptide is Small ribosomal subunit protein uS9c (rps9) (Trieres chinensis (Marine centric diatom)).